The sequence spans 260 residues: Phosphate import ATP-binding protein PstB (260 aa).

One can recognise an ABC transporter domain in the interval 14-255 (IETENLNLFY…PKNTKTEEYI (242 aa)). Position 46-53 (46-53 (GPSGCGKS)) interacts with ATP.

The protein belongs to the ABC transporter superfamily. Phosphate importer (TC 3.A.1.7) family. In terms of assembly, the complex is composed of two ATP-binding proteins (PstB), two transmembrane proteins (PstC and PstA) and a solute-binding protein (PstS).

The protein localises to the cell inner membrane. It carries out the reaction phosphate(out) + ATP + H2O = ADP + 2 phosphate(in) + H(+). Functionally, part of the ABC transporter complex PstSACB involved in phosphate import. Responsible for energy coupling to the transport system. In Borreliella afzelii (strain PKo) (Borrelia afzelii), this protein is Phosphate import ATP-binding protein PstB.